Reading from the N-terminus, the 566-residue chain is MSADCSVGSNPLAQLNKHAQQNPALRQVGYQNPASNVAQNFKTHVNEVSNANRFQMDQFMNRSPGFSDGQLGMAPVPSAILSHGPRFGLKKQDSGSSNMSAGDTAQHSRSWGNEFNSRSPQQGLASRVNNVERISNTNSMSSYRPGMSRIGRPMMHTGISSLHNYSHMSQQTPQMSSDDGVLADKQWNEQFEALEKAVAENLTMEDNKEETKEEIVVEDGYQADFQEVWDKLQAETADNNLETSDSQWEKDYARYMTGKATHIPPYRFDNDNQYMHNPNAYEIGCILMENGAKLSEAALAFEAAVQEDPAHVDAWLKLGLVQTQNEKEMNGISALEQCLSLDPTNQQALMTISISYINEGYDLTAFSMLNRWLDSKYPELTRSPTIDEANIDRFNLSKQVITKYLQVANALPQVDPEVQLGLGTLFYANEEFGKTIDCFRTALEVNPNDELMWNRLGASLANSNRSEEAIQAYHKALALKPSFVRARYNLAISSMNIGCYKEAAESLLSALSMHEVENVPITGSVVQSNNILETLKRSFVAMDRRDLLEKVMPGMDLQQFRNEFNF.

A Glycyl cysteine thioester (Cys-Gly) (interchain with G-Cter in ubiquitin) cross-link involves residue cysteine 5. An amphipathic helix 1 (AH1) region spans residues 6 to 28 (SVGSNPLAQLNKHAQQNPALRQV). A Glycyl lysine isopeptide (Lys-Gly) (interchain with G-Cter in ubiquitin) cross-link involves residue lysine 17. The amphipathic helix 2 (AH2) stretch occupies residues 53–71 (RFQMDQFMNRSPGFSDGQL). The interval 88 to 159 (GLKKQDSGSS…IGRPMMHTGI (72 aa)) is disordered. Polar residues predominate over residues 94 to 142 (SGSSNMSAGDTAQHSRSWGNEFNSRSPQQGLASRVNNVERISNTNSMSS). The WxxxF/Y motif 1 signature appears at 111 to 115 (WGNEF). The interval 145–151 (PGMSRIG) is amphipathic helix 3 (AH3). The WxxxF/Y motif 2 signature appears at 187–191 (WNEQF). The amphipathic helix 4 (AH4) stretch occupies residues 225-241 (FQEVWDKLQAETADNNL). Residues 248–252 (WEKDY) carry the WxxxF/Y motif 3 motif. 5 TPR repeats span residues 277–311 (NPNA…DPAH), 312–345 (VDAW…DPTN), 416–449 (PEVQ…NPND), 451–483 (LMWN…KPSF), and 485–517 (RARY…HEVE).

This sequence belongs to the peroxisomal targeting signal receptor family. Interacts (via WxxxF/Y and LVxEF motifs) with PEX14; promoting translocation through the PEX13-PEX14 docking complex. In terms of processing, monoubiquitinated at Cys-5 by PEX2 during PEX5 passage through the retrotranslocation channel: monoubiquitination acts as a signal for PEX5 extraction and is required for proper export from peroxisomes and recycling. When PEX5 recycling is compromised, polyubiquitinated at Lys-17 by PEX10 during its passage through the retrotranslocation channel, leading to its degradation.

The protein resides in the cytoplasm. Its subcellular location is the cytosol. The protein localises to the peroxisome matrix. Receptor that mediates peroxisomal import of proteins containing a C-terminal PTS1-type tripeptide peroxisomal targeting signal (SKL-type). Binds to cargo proteins containing a PTS1 peroxisomal targeting signal in the cytosol, and translocates them into the peroxisome matrix by passing through the PEX13-PEX14 docking complex along with cargo proteins. PEX5 receptor is then retrotranslocated into the cytosol, leading to release of bound cargo in the peroxisome matrix, and reset for a subsequent peroxisome import cycle. This chain is Peroxisomal targeting signal receptor (PEX5), found in Kluyveromyces lactis (strain ATCC 8585 / CBS 2359 / DSM 70799 / NBRC 1267 / NRRL Y-1140 / WM37) (Yeast).